The primary structure comprises 230 residues: 2-C-methyl-D-erythritol 4-phosphate cytidylyltransferase (230 aa).

This sequence belongs to the IspD/TarI cytidylyltransferase family. IspD subfamily.

It carries out the reaction 2-C-methyl-D-erythritol 4-phosphate + CTP + H(+) = 4-CDP-2-C-methyl-D-erythritol + diphosphate. It functions in the pathway isoprenoid biosynthesis; isopentenyl diphosphate biosynthesis via DXP pathway; isopentenyl diphosphate from 1-deoxy-D-xylulose 5-phosphate: step 2/6. In terms of biological role, catalyzes the formation of 4-diphosphocytidyl-2-C-methyl-D-erythritol from CTP and 2-C-methyl-D-erythritol 4-phosphate (MEP). The polypeptide is 2-C-methyl-D-erythritol 4-phosphate cytidylyltransferase (Synechocystis sp. (strain ATCC 27184 / PCC 6803 / Kazusa)).